The primary structure comprises 626 residues: Basic helix-loop-helix ARNT-like protein 1 (626 aa).

A disordered region spans residues 1 to 60; sequence MADQRMDISSTISDFMSPGATDLLSSPLGTSGMDCNRKRKGSSTDYQESMDTDKDDPHGR. S17 carries the post-translational modification Phosphoserine; by GSK3-beta. T21 bears the Phosphothreonine; by GSK3-beta mark. The Nuclear localization signal motif lies at 36-41; sequence NRKRKG. Residues 51–60 are compositionally biased toward basic and acidic residues; sequence DTDKDDPHGR. The bHLH domain maps to 72 to 125; it reads NAREAHSQIEKRRRDKMNSFIDELASLVPTCNAMSRKLDKLTVLRMAVQHMKTL. S78 is subject to Phosphoserine. S90 bears the Phosphoserine; by CK2 mark. The short motif at 142 to 152 is the Nuclear export signal 1 element; the sequence is LSDDELKHLIL. The 73-residue stretch at 143–215 folds into the PAS 1 domain; sequence SDDELKHLIL…EQLSSSDTAP (73 aa). K252 is covalently cross-linked (Glycyl lysine isopeptide (Lys-Gly) (interchain with G-Cter in SUMO2 and SUMO3)). Residue K259 forms a Glycyl lysine isopeptide (Lys-Gly) (interchain with G-Cter in SUMO); alternate linkage. A Glycyl lysine isopeptide (Lys-Gly) (interchain with G-Cter in SUMO2); alternate cross-link involves residue K259. One can recognise a PAS 2 domain in the interval 326-396; that stretch reads PQPVNGEIRV…ECHRQVLQTR (71 aa). A Nuclear export signal 2 motif is present at residues 361–369; sequence LAYLPQELL. Residues 401–444 enclose the PAC domain; sequence TNCYKFKIKDGSFITLRSRWFSFMNPWTKEVEYIVSTNTVVLAN. Disordered stretches follow at residues 457-493 and 510-597; these read TASP…AGAG and RGSS…SNDE. Residues 484-493 show a composition bias toward gly residues; the sequence is IPGGTRAGAG. Residues 508-588 are interaction with CIART; it reads RIRGSSPSSC…IGIDMIDNDQ (81 aa). Over residues 511 to 521 the composition is skewed to low complexity; it reads GSSPSSCGSSP. Position 538 is an N6-acetyllysine (K538).

Component of the circadian clock oscillator which includes the CRY1/2 proteins, CLOCK or NPAS2, BMAL1 or BMAL2, CSNK1D and/or CSNK1E, TIMELESS and the PER1/2/3 proteins. Forms a heterodimer with CLOCK. The CLOCK-BMAL1 heterodimer is required for E-box-dependent transactivation, for CLOCK nuclear translocation and degradation, and, for phosphorylation of both CLOCK and BMAL1. Part of a nuclear complex which also includes RACK1 and PRKCA; RACK1 and PRKCA are recruited to the complex in a circadian manner. Interacts with NPAS2. Interacts with EZH2. Interacts with SUMO3. Interacts with SIRT1. Interacts with AHR. Interacts with ID1, ID2 and ID3. Interacts with DDX4. Interacts with OGT. Interacts with EED and SUZ12. Interacts with MTA1. Interacts with CIART. Interacts with HSP90. Interacts with KAT2B and EP300. Interacts with BHLHE40/DEC1 and BHLHE41/DEC2. Interacts with RELB and the interaction is enhanced in the presence of CLOCK. Interacts with PER1, PER2, CRY1 and CRY2 and this interaction requires a translocation to the nucleus. Interaction of the CLOCK-BMAL1 heterodimer with PER or CRY inhibits transcription activation. Interaction of the CLOCK-BMAL1 with CRY1 is independent of DNA but with PER2 is off DNA. The CLOCK-BMAL1 heterodimer interacts with GSK3B. Interacts with KDM5A. Interacts with KMT2A; in a circadian manner. Interacts with UBE3A. Interacts with PRKCG. Interacts with MAGEL2. Interacts with NCOA2. Interacts with THRAP3. The CLOCK-BMAL1 heterodimer interacts with PASD1. Interacts with PASD1. Interacts with USP9X. Interacts with PIWIL2 (via PIWI domain). Interacts with HDAC3. Interacts with HNF4A. Ubiquitinated, leading to its proteasomal degradation. Deubiquitinated by USP9X. Post-translationally, O-glycosylated; contains O-GlcNAc. O-glycosylation by OGT prevents protein degradation by inhibiting ubiquitination. It also stabilizes the CLOCK-BMAL1 heterodimer thereby increasing CLOCK-BMAL1-mediated transcription of genes in the negative loop of the circadian clock such as PER1/2/3 and CRY1/2. In terms of processing, acetylated on Lys-538 by CLOCK during the repression phase of the circadian cycle. Acetylation facilitates recruitment of CRY1 protein and initiates the repression phase of the circadian cycle. Acetylated at Lys-538 by KAT5 during the activation phase of the cycle, leading to recruitment of the positive transcription elongation factor b (P-TEFb) and BRD4, followed by productive elongation of circadian transcripts. Deacetylated by SIRT1, which may result in decreased protein stability. Phosphorylated upon dimerization with CLOCK. Phosphorylation enhances the transcriptional activity, alters the subcellular localization and decreases the stability of the CLOCK-BMAL1 heterodimer by promoting its degradation. Phosphorylation shows circadian variations in the liver with a peak between CT10 to CT14. Phosphorylation at Ser-90 by CK2 is essential for its nuclear localization, its interaction with CLOCK and controls CLOCK nuclear entry. Dephosphorylation at Ser-78 is important for dimerization with CLOCK and transcriptional activity. Post-translationally, sumoylated on Lys-259 upon dimerization with CLOCK. Predominantly conjugated to poly-SUMO2/3 rather than SUMO1 and the level of these conjugates undergo rhythmic variation, peaking at CT9-CT12. Sumoylation localizes it exclusively to the PML body and promotes its ubiquitination in the PML body, ubiquitin-dependent proteasomal degradation and the transcriptional activity of the CLOCK-BMAL1 heterodimer. In terms of processing, undergoes lysosome-mediated degradation in a time-dependent manner in the liver.

It localises to the nucleus. It is found in the cytoplasm. The protein localises to the PML body. Its function is as follows. Transcriptional activator which forms a core component of the circadian clock. The circadian clock, an internal time-keeping system, regulates various physiological processes through the generation of approximately 24 hour circadian rhythms in gene expression, which are translated into rhythms in metabolism and behavior. It is derived from the Latin roots 'circa' (about) and 'diem' (day) and acts as an important regulator of a wide array of physiological functions including metabolism, sleep, body temperature, blood pressure, endocrine, immune, cardiovascular, and renal function. Consists of two major components: the central clock, residing in the suprachiasmatic nucleus (SCN) of the brain, and the peripheral clocks that are present in nearly every tissue and organ system. Both the central and peripheral clocks can be reset by environmental cues, also known as Zeitgebers (German for 'timegivers'). The predominant Zeitgeber for the central clock is light, which is sensed by retina and signals directly to the SCN. The central clock entrains the peripheral clocks through neuronal and hormonal signals, body temperature and feeding-related cues, aligning all clocks with the external light/dark cycle. Circadian rhythms allow an organism to achieve temporal homeostasis with its environment at the molecular level by regulating gene expression to create a peak of protein expression once every 24 hours to control when a particular physiological process is most active with respect to the solar day. Transcription and translation of core clock components (CLOCK, NPAS2, BMAL1, BMAL2, PER1, PER2, PER3, CRY1 and CRY2) plays a critical role in rhythm generation, whereas delays imposed by post-translational modifications (PTMs) are important for determining the period (tau) of the rhythms (tau refers to the period of a rhythm and is the length, in time, of one complete cycle). A diurnal rhythm is synchronized with the day/night cycle, while the ultradian and infradian rhythms have a period shorter and longer than 24 hours, respectively. Disruptions in the circadian rhythms contribute to the pathology of cardiovascular diseases, cancer, metabolic syndromes and aging. A transcription/translation feedback loop (TTFL) forms the core of the molecular circadian clock mechanism. Transcription factors, CLOCK or NPAS2 and BMAL1 or BMAL2, form the positive limb of the feedback loop, act in the form of a heterodimer and activate the transcription of core clock genes and clock-controlled genes (involved in key metabolic processes), harboring E-box elements (5'-CACGTG-3') within their promoters. The core clock genes: PER1/2/3 and CRY1/2 which are transcriptional repressors form the negative limb of the feedback loop and interact with the CLOCK|NPAS2-BMAL1|BMAL2 heterodimer inhibiting its activity and thereby negatively regulating their own expression. This heterodimer also activates nuclear receptors NR1D1, NR1D2, RORA, RORB and RORG, which form a second feedback loop and which activate and repress BMAL1 transcription, respectively. BMAL1 positively regulates myogenesis and negatively regulates adipogenesis via the transcriptional control of the genes of the canonical Wnt signaling pathway. Plays a role in normal pancreatic beta-cell function; regulates glucose-stimulated insulin secretion via the regulation of antioxidant genes NFE2L2/NRF2 and its targets SESN2, PRDX3, CCLC and CCLM. Negatively regulates the mTORC1 signaling pathway; regulates the expression of MTOR and DEPTOR. Controls diurnal oscillations of Ly6C inflammatory monocytes; rhythmic recruitment of the PRC2 complex imparts diurnal variation to chemokine expression that is necessary to sustain Ly6C monocyte rhythms. Regulates the expression of HSD3B2, STAR, PTGS2, CYP11A1, CYP19A1 and LHCGR in the ovary and also the genes involved in hair growth. Plays an important role in adult hippocampal neurogenesis by regulating the timely entry of neural stem/progenitor cells (NSPCs) into the cell cycle and the number of cell divisions that take place prior to cell-cycle exit. Regulates the circadian expression of CIART. The CLOCK-BMAL1 heterodimer regulates the circadian expression of SERPINE1/PAI1, VWF, B3, CCRN4L/NOC, NAMPT, DBP, MYOD1, PPARGC1A, PPARGC1B, SIRT1, GYS2, F7, NGFR, GNRHR, BHLHE40/DEC1, ATF4, MTA1 and also genes implicated in glucose and lipid metabolism. Promotes rhythmic chromatin opening, regulating the DNA accessibility of other transcription factors. The NPAS2-BMAL1 heterodimer positively regulates the expression of MAOA, F7 and LDHA and modulates the circadian rhythm of daytime contrast sensitivity by regulating the rhythmic expression of adenylate cyclase type 1 (ADCY1) in the retina. The preferred binding motif for the CLOCK-BMAL1 heterodimer is 5'-CACGTGA-3', which contains a flanking adenine nucleotide at the 3-prime end of the canonical 6-nucleotide E-box sequence. CLOCK specifically binds to the half-site 5'-CAC-3', while BMAL1 binds to the half-site 5'-GTGA-3'. The CLOCK-BMAL1 heterodimer also recognizes the non-canonical E-box motifs 5'-AACGTGA-3' and 5'-CATGTGA-3'. Essential for the rhythmic interaction of CLOCK with ASS1 and plays a critical role in positively regulating CLOCK-mediated acetylation of ASS1. Plays a role in protecting against lethal sepsis by limiting the expression of immune checkpoint protein CD274 in macrophages in a PKM2-dependent manner. Regulates the diurnal rhythms of skeletal muscle metabolism via transcriptional activation of genes promoting triglyceride synthesis (DGAT2) and metabolic efficiency (COQ10B). The protein is Basic helix-loop-helix ARNT-like protein 1 (BMAL1) of Equus caballus (Horse).